The sequence spans 597 residues: Probable potassium transport system protein Kup 1 (597 aa).

Helical transmembrane passes span 23 to 43 (GAWL…DSVL), 72 to 92 (LTMM…SRGT), 98 to 118 (VFGS…VVAI), 143 to 163 (ATGL…EALY), 174 to 194 (IYFT…GQGA), 226 to 246 (AVVL…TGAF), 273 to 293 (LYIP…LLLF), 303 to 323 (YGLA…IYLW), 329 to 349 (FGAV…FAAS), and 353 to 373 (FLHG…IMYT).

Belongs to the HAK/KUP transporter (TC 2.A.72) family.

The protein localises to the cell membrane. The enzyme catalyses K(+)(in) + H(+)(in) = K(+)(out) + H(+)(out). Transport of potassium into the cell. Likely operates as a K(+):H(+) symporter. The polypeptide is Probable potassium transport system protein Kup 1 (kup1) (Bifidobacterium longum (strain NCC 2705)).